Reading from the N-terminus, the 319-residue chain is HTH-type transcriptional regulator YidZ (319 aa).

The HTH lysR-type domain occupies 8–65 (LDLNLLLCLQLLMQERSVTKAAKRMNVTPSAVSKSLAKLRAWFDDPLFVNSPLGLSPT). The segment at residues 25–44 (VTKAAKRMNVTPSAVSKSLA) is a DNA-binding region (H-T-H motif).

This sequence belongs to the LysR transcriptional regulatory family.

Functionally, involved in anaerobic NO protection. The sequence is that of HTH-type transcriptional regulator YidZ from Escherichia coli O6:H1 (strain CFT073 / ATCC 700928 / UPEC).